Consider the following 263-residue polypeptide: Leukocyte-associated immunoglobulin-like receptor 1 (263 aa).

The signal sequence occupies residues 1 to 21 (MPLHSVIVLVLVLCLGWKSNT). The Ig-like C2-type domain occupies 27 to 112 (SDFTICAEPG…VWSQRSNDLQ (86 aa)). C49 and C96 are joined by a disulfide. N87 is a glycosylation site (N-linked (GlcNAc...) asparagine). A helical membrane pass occupies residues 144 to 164 (ILTVVSVIFLLCLSLFLFCFL). Short sequence motifs (ITIM motif) lie at residues 225 to 230 (VTYAQL) and 255 to 260 (STYAAI). Phosphotyrosine is present on residues Y227 and Y257.

In terms of assembly, interacts with SH2 domains of tyrosine-protein phosphatases PTPN6 and PTPN11. The interaction with PTPN6 is constitutive. Interacts with the SH2 domain of CSK. Binds with high affinity to extracellular matrix collagens, the interaction is functionally important. In terms of processing, phosphorylation at Tyr-227 and Tyr-257 activates it. May be phosphorylated by LCK. Post-translationally, N-glycosylated. In terms of tissue distribution, expressed in lymphoid and non-lymphoid organs.

Its subcellular location is the membrane. Functions as an inhibitory receptor that plays a constitutive negative regulatory role on cytolytic function of natural killer (NK) cells, B-cells and T-cells. Activation by Tyr phosphorylation results in recruitment and activation of the phosphatases PTPN6 and PTPN11. It also reduces the increase of intracellular calcium evoked by B-cell receptor ligation. May also play its inhibitory role independently of SH2-containing phosphatases. Modulates cytokine production in CD4+ T-cells, down-regulating IL2 and IFNG production while inducing secretion of transforming growth factor beta. Also down-regulates IgG and IgE production in B-cells as well as IL8, IL10 and TNF secretion. Inhibits proliferation and induces apoptosis in myeloid leukemia cell lines as well as prevents nuclear translocation of NF-kappa-B p65 subunit/RELA and phosphorylation of I-kappa-B alpha/CHUK in these cells. Inhibits the differentiation of peripheral blood precursors towards dendritic cells. The chain is Leukocyte-associated immunoglobulin-like receptor 1 (Lair1) from Rattus norvegicus (Rat).